The following is a 420-amino-acid chain: Glucose-1-phosphate adenylyltransferase (420 aa).

Residues Tyr-107, Gly-172, 187–188 (EK), and Ser-205 each bind alpha-D-glucose 1-phosphate.

It belongs to the bacterial/plant glucose-1-phosphate adenylyltransferase family. In terms of assembly, homotetramer.

The enzyme catalyses alpha-D-glucose 1-phosphate + ATP + H(+) = ADP-alpha-D-glucose + diphosphate. The protein operates within glycan biosynthesis; glycogen biosynthesis. In terms of biological role, involved in the biosynthesis of ADP-glucose, a building block required for the elongation reactions to produce glycogen. Catalyzes the reaction between ATP and alpha-D-glucose 1-phosphate (G1P) to produce pyrophosphate and ADP-Glc. The protein is Glucose-1-phosphate adenylyltransferase of Agrobacterium fabrum (strain C58 / ATCC 33970) (Agrobacterium tumefaciens (strain C58)).